Here is a 948-residue protein sequence, read N- to C-terminus: Protocadherin alpha-2 (948 aa).

An N-terminal signal peptide occupies residues 1 to 22 (MASSIRRGRGAWTRLLSLLLLA). Topologically, residues 23-697 (AWEVGSGQLR…GSEATLVDVN (675 aa)) are extracellular. Cadherin domains are found at residues 30-133 (QLRY…PPIF), 157-242 (ASDA…EPTF), 243-350 (AQSV…TPEV), 351-455 (SITS…APAF), 456-565 (AQPE…APAL), and 588-678 (GHVV…APKA). N-linked (GlcNAc...) asparagine glycosylation is found at Asn-257, Asn-265, Asn-362, and Asn-548. A helical transmembrane segment spans residues 698 to 718 (VYLIIAICAVSSLLVLTVLLY). The Cytoplasmic portion of the chain corresponds to 719-948 (TALRCSVPPT…GNSTTDNSDQ (230 aa)). One copy of the PXXP 1 repeat lies at 734–737 (PGKP). A 5 X 4 AA repeats of P-X-X-P region spans residues 734–892 (PGKPTLVCSS…PDKFIIPGSP (159 aa)). Disordered regions lie at residues 754–801 (RRQR…RQPN), 829–854 (GPGG…EVSP), and 868–948 (KYGP…NSDQ). Residues 783 to 795 (AEEKQLSESEYVG) show a composition bias toward basic and acidic residues. PXXP repeat units follow at residues 797–800 (PRQP), 830–833 (PGGP), 871–874 (PGNP), and 889–892 (PGSP). A compositionally biased stretch (basic and acidic residues) spans 907 to 921 (DKSDFITFGKKEETK).

The protein localises to the cell membrane. In terms of biological role, potential calcium-dependent cell-adhesion protein. May be involved in the establishment and maintenance of specific neuronal connections in the brain. The protein is Protocadherin alpha-2 (PCDHA2) of Homo sapiens (Human).